The chain runs to 421 residues: UDP-glucuronic acid decarboxylase 1 (421 aa).

At methionine 1 to lysine 19 the chain is on the cytoplasmic side. The chain crosses the membrane as a helical span at residues leucine 20–methionine 40. Residues serine 41–asparagine 421 lie on the Lumenal side of the membrane. Positions 99, 100, 101, 120, 121, 123, 124, 125, 145, and 146 each coordinate NAD(+). UDP-alpha-D-glucuronate-binding residues include leucine 150 and tyrosine 151. NAD(+) is bound by residues leucine 160 and serine 162. Position 178 (lysine 178) interacts with UDP-alpha-D-glucuronate. NAD(+) is bound at residue threonine 179. UDP-alpha-D-glucuronate contacts are provided by asparagine 186, glycine 189, lysine 192, and arginine 193. 3 residues coordinate NAD(+): alanine 201, tyrosine 232, and lysine 236. Tyrosine 232 (proton acceptor) is an active-site residue. Residues tyrosine 246, glutamine 249, and glutamate 250 each contribute to the UDP-alpha-D-glucuronate site. The NAD(+) site is built by threonine 262, histidine 268, and arginine 273. 2 N-linked (GlcNAc...) asparagine glycosylation sites follow: asparagine 317 and asparagine 386. A disordered region spans residues alanine 400–asparagine 421. Over residues lysine 409–asparagine 421 the composition is skewed to basic residues.

Belongs to the NAD(P)-dependent epimerase/dehydratase family. UDP-glucuronic acid decarboxylase subfamily. Homodimer and homotetramer. NAD(+) is required as a cofactor.

It is found in the golgi apparatus. The protein resides in the golgi stack membrane. The catalysed reaction is UDP-alpha-D-glucuronate + H(+) = UDP-alpha-D-xylose + CO2. Its pathway is nucleotide-sugar biosynthesis; UDP-alpha-D-xylose biosynthesis; UDP-alpha-D-xylose from UDP-alpha-D-glucuronate: step 1/1. Catalyzes the NAD-dependent decarboxylation of UDP-glucuronic acid to UDP-xylose. Necessary for the biosynthesis of the core tetrasaccharide in glycosaminoglycan biosynthesis. The chain is UDP-glucuronic acid decarboxylase 1 (uxs1) from Xenopus tropicalis (Western clawed frog).